A 1382-amino-acid chain; its full sequence is Histone-lysine N-methyltransferase SUVR5 (1382 aa).

2 disordered regions span residues 43-62 (TVTG…SEPK) and 354-373 (GNTN…NTPE). C2H2-type zinc fingers lie at residues 735–758 (FACA…EERH), 769–792 (LQCI…QAVH), and 838–861 (FVCK…QAEH). The disordered stretch occupies residues 915–935 (RRMQGSKSLGTEGNTEAGVSP). A compositionally biased stretch (polar residues) spans 919 to 928 (GSKSLGTEGN). Positions 1145-1221 (LRCSCRSSVC…TCQNRVLQNG (77 aa)) constitute a Pre-SET domain. The Zn(2+) site is built by cysteine 1147, cysteine 1149, cysteine 1154, cysteine 1159, cysteine 1182, cysteine 1203, cysteine 1207, cysteine 1209, and cysteine 1213. In terms of domain architecture, SET spans 1224-1356 (AKLEVFRTES…AGEEITRDYG (133 aa)). S-adenosyl-L-methionine contacts are provided by residues 1234-1236 (KGW), tyrosine 1277, and 1313-1314 (NH). Cysteine 1316 lines the Zn(2+) pocket. Tyrosine 1355 contacts S-adenosyl-L-methionine. Residues 1366 to 1382 (NEHPCHCKATNCRGLLS) form the Post-SET domain. Positions 1370, 1372, and 1377 each coordinate Zn(2+).

Belongs to the class V-like SAM-binding methyltransferase superfamily. As to quaternary structure, component of a regulatory complex with LDL1/SWP1. Interacts with LDL1/SWP1.

It is found in the nucleus. The protein resides in the chromosome. It carries out the reaction L-lysyl-[histone] + S-adenosyl-L-methionine = N(6)-methyl-L-lysyl-[histone] + S-adenosyl-L-homocysteine + H(+). Histone methyltransferase that functions together with its binding partner LDL1/SWP1 as one of the regulators of flower timing in Arabidopsis. Mediates H3K9me2 deposition and regulates gene expression in a DNA methylation-independent manner. Binds DNA through its zinc fingers and represses the expression of a subset of stimulus response genes. May represent a novel mechanism for plants to regulate their chromatin and transcriptional state, which may allow for the adaptability and modulation necessary to rapidly respond to environment or developmental cues. This Arabidopsis thaliana (Mouse-ear cress) protein is Histone-lysine N-methyltransferase SUVR5.